The sequence spans 758 residues: Catalase-peroxidase (758 aa).

The span at 1 to 10 (MSDTQDNAPV) shows a compositional bias: polar residues. Residues 1-57 (MSDTQDNAPVSAQGVDQKAAAGCPVAHDSVTAHGSESESPAIDSPSAVGGGRPRTNR) form a disordered region. Positions 128–250 (WHAAGTYRIH…VGATEMGLIY (123 aa)) form a cross-link, tryptophyl-tyrosyl-methioninium (Trp-Tyr) (with M-276). The active-site Proton acceptor is the His129. Residues 250 to 276 (YVNPEGPRGNADPASAAHFIRETFRRM) constitute a cross-link (tryptophyl-tyrosyl-methioninium (Tyr-Met) (with W-128)). Heme b is bound at residue His291.

This sequence belongs to the peroxidase family. Peroxidase/catalase subfamily. Homodimer or homotetramer. Heme b is required as a cofactor. Formation of the three residue Trp-Tyr-Met cross-link is important for the catalase, but not the peroxidase activity of the enzyme.

The enzyme catalyses H2O2 + AH2 = A + 2 H2O. It catalyses the reaction 2 H2O2 = O2 + 2 H2O. Functionally, bifunctional enzyme with both catalase and broad-spectrum peroxidase activity. This Salinispora tropica (strain ATCC BAA-916 / DSM 44818 / JCM 13857 / NBRC 105044 / CNB-440) protein is Catalase-peroxidase.